The chain runs to 318 residues: Putative S-adenosyl-L-methionine-dependent methyltransferase BCG_0781c (318 aa).

Residues D135 and 164–165 (DL) contribute to the S-adenosyl-L-methionine site.

The protein belongs to the UPF0677 family.

Its function is as follows. Exhibits S-adenosyl-L-methionine-dependent methyltransferase activity. The protein is Putative S-adenosyl-L-methionine-dependent methyltransferase BCG_0781c of Mycobacterium bovis (strain BCG / Pasteur 1173P2).